A 309-amino-acid polypeptide reads, in one-letter code: Homoserine O-succinyltransferase (309 aa).

The Acyl-thioester intermediate role is filled by Cys142. Substrate-binding residues include Lys163 and Ser192. His235 functions as the Proton acceptor in the catalytic mechanism. Glu237 is a catalytic residue. Arg249 serves as a coordination point for substrate.

The protein belongs to the MetA family.

The protein resides in the cytoplasm. It carries out the reaction L-homoserine + succinyl-CoA = O-succinyl-L-homoserine + CoA. Its pathway is amino-acid biosynthesis; L-methionine biosynthesis via de novo pathway; O-succinyl-L-homoserine from L-homoserine: step 1/1. Transfers a succinyl group from succinyl-CoA to L-homoserine, forming succinyl-L-homoserine. The polypeptide is Homoserine O-succinyltransferase (Yersinia enterocolitica serotype O:8 / biotype 1B (strain NCTC 13174 / 8081)).